A 670-amino-acid polypeptide reads, in one-letter code: DNA ligase (670 aa).

Residues 32 to 36 (DSEYD), 81 to 82 (SL), and glutamate 114 each bind NAD(+). Lysine 116 serves as the catalytic N6-AMP-lysine intermediate. Residues arginine 137, glutamate 174, lysine 291, and lysine 315 each contribute to the NAD(+) site. Zn(2+)-binding residues include cysteine 409, cysteine 412, cysteine 427, and cysteine 433. A BRCT domain is found at 592–670 (ASENLFKDKT…EEEFLAQITR (79 aa)).

This sequence belongs to the NAD-dependent DNA ligase family. LigA subfamily. Mg(2+) is required as a cofactor. It depends on Mn(2+) as a cofactor.

It catalyses the reaction NAD(+) + (deoxyribonucleotide)n-3'-hydroxyl + 5'-phospho-(deoxyribonucleotide)m = (deoxyribonucleotide)n+m + AMP + beta-nicotinamide D-nucleotide.. Functionally, DNA ligase that catalyzes the formation of phosphodiester linkages between 5'-phosphoryl and 3'-hydroxyl groups in double-stranded DNA using NAD as a coenzyme and as the energy source for the reaction. It is essential for DNA replication and repair of damaged DNA. This chain is DNA ligase, found in Haemophilus influenzae (strain ATCC 51907 / DSM 11121 / KW20 / Rd).